The chain runs to 452 residues: NADH-quinone oxidoreductase subunit H (452 aa).

A run of 9 helical transmembrane segments spans residues 28–48 (IILI…LMMI), 96–116 (VIYI…FSVI), 136–156 (LPVA…GIVL), 177–197 (VISY…YAGT), 210–230 (IWFA…MIGE), 264–286 (AEYV…GYLA), 301–321 (WWPA…FVWV), 335–355 (KLGW…VAVI), and 366–386 (YVTA…LWAW).

Belongs to the complex I subunit 1 family. In terms of assembly, NDH-1 is composed of 14 different subunits. Subunits NuoA, H, J, K, L, M, N constitute the membrane sector of the complex.

Its subcellular location is the cell membrane. It catalyses the reaction a quinone + NADH + 5 H(+)(in) = a quinol + NAD(+) + 4 H(+)(out). Its function is as follows. NDH-1 shuttles electrons from NADH, via FMN and iron-sulfur (Fe-S) centers, to quinones in the respiratory chain. The immediate electron acceptor for the enzyme in this species is believed to be ubiquinone. Couples the redox reaction to proton translocation (for every two electrons transferred, four hydrogen ions are translocated across the cytoplasmic membrane), and thus conserves the redox energy in a proton gradient. This subunit may bind ubiquinone. This chain is NADH-quinone oxidoreductase subunit H, found in Thermobifida fusca (strain YX).